The chain runs to 129 residues: UPF0344 protein MW0851 (129 aa).

The next 4 helical transmembrane spans lie at Met-1–Leu-21, Leu-36–Ile-56, Met-67–Ile-87, and Met-99–Leu-119.

It belongs to the UPF0344 family.

It is found in the cell membrane. This is UPF0344 protein MW0851 from Staphylococcus aureus (strain MW2).